A 274-amino-acid polypeptide reads, in one-letter code: MCATLRPMETLGFCMLSPSTLPLRKWGIRLCRAGYRALGALLGTGVLVCCASSTNMTVSNDYPPKELGVLNAYTVDRLRTAISPRDFTFVFDPPIDTVLMQFKFLLDGITLYLERKDRTALREAIEKYLGEYEAQTLTREKSSERAYFGTTTPLMTWGILGSAHNATPTMRFEYQFITDDRPYFIIANRTIPGANGYNCPAVRIALSPAQCSQVMQYLDQGNLDALLEEMAQSFETFDTQQDPKKTPETDKNAAYKGKEKKGKKEERGPRSIMK.

Residues 235 to 274 are disordered; the sequence is ETFDTQQDPKKTPETDKNAAYKGKEKKGKKEERGPRSIMK. The span at 241 to 274 shows a compositional bias: basic and acidic residues; it reads QDPKKTPETDKNAAYKGKEKKGKKEERGPRSIMK.

This is an uncharacterized protein from Treponema pallidum (strain Nichols).